Reading from the N-terminus, the 337-residue chain is Phenylalanine--tRNA ligase alpha subunit (337 aa).

Position 258 (Glu-258) interacts with Mg(2+).

This sequence belongs to the class-II aminoacyl-tRNA synthetase family. Phe-tRNA synthetase alpha subunit type 1 subfamily. Tetramer of two alpha and two beta subunits. Requires Mg(2+) as cofactor.

It localises to the cytoplasm. It catalyses the reaction tRNA(Phe) + L-phenylalanine + ATP = L-phenylalanyl-tRNA(Phe) + AMP + diphosphate + H(+). The polypeptide is Phenylalanine--tRNA ligase alpha subunit (Burkholderia cenocepacia (strain ATCC BAA-245 / DSM 16553 / LMG 16656 / NCTC 13227 / J2315 / CF5610) (Burkholderia cepacia (strain J2315))).